A 149-amino-acid polypeptide reads, in one-letter code: MSATDPTVVLGTIGSDAHAVGITLLDHALREAGFTVHNLGAQTAKTEFATAAADHDADAVLVSSLYGHAQQDCAGLHDQLAAAGVDATTVVGGNLAVGQTDFETVKQRFEEMGFDRVFSAQTGFEAVVDAVKTELDVDERSPTTTTLGA.

Positions 5–138 (DPTVVLGTIG…DAVKTELDVD (134 aa)) constitute a B12-binding domain. Adenosylcob(III)alamin-binding positions include 15–19 (SDAHA), His18, 63–65 (SSL), and 94–98 (NLAVG).

This sequence belongs to the methylaspartate mutase GlmS subunit family. Heterotetramer composed of 2 epsilon subunits (GlmE) and 2 sigma subunits (GlmS). GlmE exists as a homodimer and GlmS as a monomer. Adenosylcob(III)alamin serves as cofactor.

It catalyses the reaction (2S,3S)-3-methyl-L-aspartate = L-glutamate. It functions in the pathway amino-acid degradation; L-glutamate degradation via mesaconate pathway; acetate and pyruvate from L-glutamate: step 1/4. Functionally, catalyzes the carbon skeleton rearrangement of L-glutamate to L-threo-3-methylaspartate ((2S,3S)-3-methylaspartate). The chain is Glutamate mutase sigma subunit from Halobacterium salinarum (strain ATCC 700922 / JCM 11081 / NRC-1) (Halobacterium halobium).